A 169-amino-acid chain; its full sequence is PTS system glucose-specific EIIA component (169 aa).

One can recognise a PTS EIIA type-1 domain in the interval D39–N143. Zn(2+) is bound by residues H76 and H91. The active-site Tele-phosphohistidine intermediate; for EIIA activity is H91. The residue at position 91 (H91) is a Phosphohistidine; by HPr.

In terms of assembly, heterodimer with glycerol kinase (glpk). Zn(2+) serves as cofactor.

It is found in the cytoplasm. Functionally, the phosphoenolpyruvate-dependent sugar phosphotransferase system (sugar PTS), a major carbohydrate active transport system, catalyzes the phosphorylation of incoming sugar substrates concomitantly with their translocation across the cell membrane. The enzyme II complex composed of PtsG and Crr is involved in glucose transport. In Escherichia coli O6:H1 (strain CFT073 / ATCC 700928 / UPEC), this protein is PTS system glucose-specific EIIA component (crr).